The chain runs to 188 residues: Elongation factor P (188 aa).

This sequence belongs to the elongation factor P family.

Its subcellular location is the cytoplasm. The protein operates within protein biosynthesis; polypeptide chain elongation. Involved in peptide bond synthesis. Stimulates efficient translation and peptide-bond synthesis on native or reconstituted 70S ribosomes in vitro. Probably functions indirectly by altering the affinity of the ribosome for aminoacyl-tRNA, thus increasing their reactivity as acceptors for peptidyl transferase. The polypeptide is Elongation factor P (Bacteroides thetaiotaomicron (strain ATCC 29148 / DSM 2079 / JCM 5827 / CCUG 10774 / NCTC 10582 / VPI-5482 / E50)).